Here is a 635-residue protein sequence, read N- to C-terminus: Sodium- and chloride-dependent creatine transporter 1 (635 aa).

The tract at residues 1–35 is disordered; sequence MAKKSAENGIYSVSGDEKKGPLIAPGPDGAPAKGD. At 1–60 the chain is on the cytoplasmic side; it reads MAKKSAENGIYSVSGDEKKGPLIAPGPDGAPAKGDGPAGLGAPGGCLAVPPRETWTRQMD. Over residues 25–35 the composition is skewed to low complexity; it reads PGPDGAPAKGD. The helical transmembrane segment at 61–81 threads the bilayer; sequence FIMSCVGFAVGLGNVWRFPYL. Residues 82 to 87 lie on the Extracellular side of the membrane; the sequence is CYKNGG. The helical transmembrane segment at 88–108 threads the bilayer; the sequence is GVFLIPYVLIALVGGIPIFFL. The Cytoplasmic portion of the chain corresponds to 109-138; the sequence is EISLGQFMKAGSINVWNICPLFKGLGYASM. Residues 139–159 form a helical membrane-spanning segment; sequence VIVFYCNTYYIMVLAWGFYYL. Over 160-230 the chain is Extracellular; sequence VKSFTTTLPW…LSGGLEVPGA (71 aa). N-linked (GlcNAc...) asparagine glycans are attached at residues asparagine 192 and asparagine 197. Residues 231-251 form a helical membrane-spanning segment; that stretch reads LNSEVTLCLLACWVLVYFCVW. The Cytoplasmic segment spans residues 252 to 269; that stretch reads KGVKSTGKIVYFTATFPY. The chain crosses the membrane as a helical span at residues 270–290; sequence VVLVVLLVRGVLLPGALDGII. Over 291–304 the chain is Extracellular; the sequence is YYLKPDWSKLRSPQ. Residues 305-325 traverse the membrane as a helical segment; it reads VWIDAGTQIFFSYAIGLGALT. The Cytoplasmic segment spans residues 326 to 341; it reads ALGSYNRFNNNCYKDA. Residues 342 to 362 form a helical membrane-spanning segment; sequence IILALINSGTSFFAGFVVFSI. Over 363–394 the chain is Extracellular; it reads LGFMATEQGVHISKVAESGPGLAFIAYPRAVT. A helical membrane pass occupies residues 395 to 415; sequence LMPVAPLWAALFFFMLLLLGL. Topologically, residues 416-444 are cytoplasmic; the sequence is DSQFVGVEGFITGLLDLLPASYYFRFQRE. A helical membrane pass occupies residues 445–465; the sequence is ISVALCCALCFVIDLSMVQMA. The Extracellular portion of the chain corresponds to 466 to 479; that stretch reads GMYVFQLFDYYSAS. Residues 480-500 form a helical membrane-spanning segment; the sequence is GTTLLWQAFWECVAVAWVYGA. At 501 to 520 the chain is on the cytoplasmic side; that stretch reads DRFMDDIACMIGYRPCPWMK. The chain crosses the membrane as a helical span at residues 521–541; the sequence is WCWSFFTPLVCMGIFIFNIVY. Residues 542-560 are Extracellular-facing; it reads YKPLVYNKTYVYPWWGEAM. The N-linked (GlcNAc...) asparagine glycan is linked to asparagine 548. A helical transmembrane segment spans residues 561–581; sequence GWAFALSSMLCVPLHLLGCLL. Residues 582–635 lie on the Cytoplasmic side of the membrane; sequence RAKGTMAERWQHLTQPVWGLHHLEYRAQDADVRGLTTLTPVSESSKVVVVESVM. A phosphothreonine mark is found at threonine 617 and threonine 620. Residue serine 623 is modified to Phosphoserine.

The protein belongs to the sodium:neurotransmitter symporter (SNF) (TC 2.A.22) family. SLC6A8 subfamily. Glycosylated. As to expression, prominent in kidney, heart, and muscle, also present in brain, but not in liver and intestine.

Its subcellular location is the cell membrane. The protein localises to the apical cell membrane. It catalyses the reaction creatine(out) + chloride(out) + 2 Na(+)(out) = creatine(in) + chloride(in) + 2 Na(+)(in). Its function is as follows. Creatine:sodium symporter which mediates the uptake of creatine. Plays an important role in supplying creatine to the brain via the blood-brain barrier. The sequence is that of Sodium- and chloride-dependent creatine transporter 1 (SLC6A8) from Oryctolagus cuniculus (Rabbit).